The primary structure comprises 176 residues: MSAQKAPKWYPSEDVAALKKTRKAARPQKLRASLVPGTVLILLAGRFRGKRVVYLKHLEDNTLLISGPFKVNGVPLRRVNARYVIATSTKVSVEGVNVEKFNVEYFAKEKLTKKEKKEANLFPEQQNKEIKAERVEDQKVVDKALIAEIKKTPLLKQYLSASFSLKNGDKPHMLKF.

Ser2 is subject to N-acetylserine. Ser12 is modified (phosphoserine). A Glycyl lysine isopeptide (Lys-Gly) (interchain with G-Cter in ubiquitin) cross-link involves residue Lys128.

The protein belongs to the eukaryotic ribosomal protein eL6 family. In terms of assembly, component of the large ribosomal subunit (LSU). Mature yeast ribosomes consist of a small (40S) and a large (60S) subunit. The 40S small subunit contains 1 molecule of ribosomal RNA (18S rRNA) and 33 different proteins (encoded by 57 genes). The large 60S subunit contains 3 rRNA molecules (25S, 5.8S and 5S rRNA) and 46 different proteins (encoded by 81 genes). Post-translationally, N-terminally acetylated by acetyltransferase NatA.

The protein localises to the cytoplasm. In terms of biological role, component of the ribosome, a large ribonucleoprotein complex responsible for the synthesis of proteins in the cell. The small ribosomal subunit (SSU) binds messenger RNAs (mRNAs) and translates the encoded message by selecting cognate aminoacyl-transfer RNA (tRNA) molecules. The large subunit (LSU) contains the ribosomal catalytic site termed the peptidyl transferase center (PTC), which catalyzes the formation of peptide bonds, thereby polymerizing the amino acids delivered by tRNAs into a polypeptide chain. The nascent polypeptides leave the ribosome through a tunnel in the LSU and interact with protein factors that function in enzymatic processing, targeting, and the membrane insertion of nascent chains at the exit of the ribosomal tunnel. The protein is Large ribosomal subunit protein eL6A of Saccharomyces cerevisiae (strain ATCC 204508 / S288c) (Baker's yeast).